Here is a 504-residue protein sequence, read N- to C-terminus: Galactose/methyl galactoside import ATP-binding protein MglA (504 aa).

ABC transporter domains follow at residues L8–D247 and T258–I504. Residue G40–S47 coordinates ATP.

It belongs to the ABC transporter superfamily. Galactose/methyl galactoside importer (TC 3.A.1.2.3) family. The complex is composed of one ATP-binding protein (MglA), two transmembrane proteins (MglC) and a solute-binding protein (MglB).

The protein resides in the cell membrane. It carries out the reaction D-galactose(out) + ATP + H2O = D-galactose(in) + ADP + phosphate + H(+). The enzyme catalyses methyl beta-D-galactoside(out) + ATP + H2O = methyl beta-D-galactoside(in) + ADP + phosphate + H(+). Its function is as follows. Part of the ABC transporter complex MglABC involved in galactose/methyl galactoside import. Responsible for energy coupling to the transport system. The sequence is that of Galactose/methyl galactoside import ATP-binding protein MglA from Clostridium tetani (strain Massachusetts / E88).